A 40-amino-acid chain; its full sequence is Unknown protein from spot 207 of 2D-PAGE of etiolated coleoptile (40 aa).

The protein belongs to the GST superfamily. HSP26 family.

This Zea mays (Maize) protein is Unknown protein from spot 207 of 2D-PAGE of etiolated coleoptile.